The sequence spans 542 residues: Endonuclease 4 homolog (542 aa).

2 disordered regions span residues 89 to 123 (NEEI…QTSI) and 141 to 234 (PFFS…ENKF). Composition is skewed to low complexity over residues 99–115 (SKKL…QQSK) and 147–170 (NNAS…TTTT). The stretch at 171 to 206 (TKKRNNKDEENEDDNEEEEEEEEEEEDKKSKKKTTT) forms a coiled coil. Over residues 179–196 (EENEDDNEEEEEEEEEEE) the composition is skewed to acidic residues. Residues 205-215 (TTTTTTTTTTA) show a composition bias toward low complexity. Residues 216–227 (YKKKSSPKKKKV) are compositionally biased toward basic residues. The short motif at 222–227 (PKKKKV) is the Nuclear localization signal element. Positions 328, 368, 404, 438, 441, 475, 488, 490, and 520 each coordinate Zn(2+).

This sequence belongs to the AP endonuclease 2 family. The cofactor is Zn(2+).

It localises to the nucleus. The catalysed reaction is Endonucleolytic cleavage to 5'-phosphooligonucleotide end-products.. Its function is as follows. Plays a role in DNA repair. It cleaves phosphodiester bonds at apurinic or apyrimidinic sites (AP sites) to produce new 5'-ends that are base-free deoxyribose 5-phosphate residues. The polypeptide is Endonuclease 4 homolog (apnA) (Dictyostelium discoideum (Social amoeba)).